Consider the following 109-residue polypeptide: Parvalbumin beta (109 aa).

Ser1 is subject to N-acetylserine. EF-hand domains lie at 38-73 (KTPD…FASS) and 77-109 (LTDK…VKEA). Positions 51, 53, 55, 57, 59, 62, 90, 92, 94, 96, and 101 each coordinate Ca(2+).

This sequence belongs to the parvalbumin family.

In muscle, parvalbumin is thought to be involved in relaxation after contraction. It binds two calcium ions. This is Parvalbumin beta from Opsanus tau (Oyster toadfish).